The primary structure comprises 1118 residues: Constitutive coactivator of PPAR-gamma-like protein 1 (1118 aa).

The interval 339-405 is interaction with YES1, SRC and FYN; it reads PPHYLAARPG…SLSEPAPLTL (67 aa). The interval 374–533 is disordered; it reads AKPVAPQVPS…GTVQPIPCLL (160 aa). Residues 376–396 are compositionally biased toward low complexity; it reads PVAPQVPSPGGAPGQGPYPYS. Polar residues-rich tracts occupy residues 405-420 and 435-447; these read LDTSGKNLTEQNSYSN and SPINPAQSGSPNH. Over residues 481-502 the composition is skewed to basic and acidic residues; sequence GWEKTGSHSEPQARGDPGDQTK. Residues 503–514 are compositionally biased toward polar residues; that stretch reads AEGSSTASSGSQ. T655 carries the phosphothreonine modification. Residues 829–1118 form an RNA binding region; sequence ADQAAKVEKM…LEAAVLNKEE (290 aa). An omega-N-methylarginine mark is found at R873, R884, and R886. Positions 921–945 are disordered; that stretch reads AFSGSDSSRTSKSQGGVQPIPSQGG. The span at 924 to 936 shows a compositional bias: polar residues; the sequence is GSDSSRTSKSQGG. K932 carries the N6-acetyllysine modification. S960 bears the Phosphoserine mark. Omega-N-methylarginine occurs at positions 982 and 986. S1023 is subject to Phosphoserine. The interval 1025–1102 is disordered; that stretch reads EEVAKELKSK…HLNALSTDSA (78 aa). Positions 1026–1037 are enriched in basic and acidic residues; sequence EVAKELKSKSGE. Residues 1038–1051 show a composition bias toward low complexity; it reads SKSSAMSSDGSLAE. 3 positions are modified to phosphoserine: S1044, S1045, and S1048. Residues 1076–1101 are compositionally biased toward polar residues; sequence HSESALNNDSKTCNTNPHLNALSTDS.

Belongs to the constitutive coactivator of PPAR-gamma family. In terms of assembly, interacts with PURA. Interacts with SRC family protein kinases YES1, SRC and FYN. Upon tyrosine phosphorylation, interacts with PIK3R1. Interacts with IGF2BP1/IMP-1 in an RNA-dependent manner. Post-translationally, arg-982 is dimethylated, probably to asymmetric dimethylarginine. Phosphorylated on tyrosine by SRC family protein kinases upon oxidative stress, for instance following UV irradiation. Widely expressed. In gastric mucosa, detected in the bottom region of the foveolar epithelium (at protein level).

It localises to the cytoplasm. It is found in the cell membrane. Functionally, component of the oxidative stress-induced survival signaling. May regulate the activation of SRC family protein kinases. May act as a scaffolding protein enabling SRC family protein kinases to phosphorylate and activate PI3-kinase. Binds IGF2 RNA and promotes the production of IGF2 protein. The chain is Constitutive coactivator of PPAR-gamma-like protein 1 (FAM120A) from Homo sapiens (Human).